A 400-amino-acid chain; its full sequence is Cartilage-associated protein (400 aa).

The first 25 residues, 1–25 (MGPRSPTAALLVLLCVGCAPTPGRG), serve as a signal peptide directing secretion. N-linked (GlcNAc...) asparagine glycosylation is found at N86 and N362.

This sequence belongs to the leprecan family. In terms of tissue distribution, found in articular chondrocytes. Expressed in a variety of tissues.

It localises to the secreted. It is found in the extracellular space. Its subcellular location is the extracellular matrix. Necessary for efficient 3-hydroxylation of fibrillar collagen prolyl residues. The polypeptide is Cartilage-associated protein (Crtap) (Mus musculus (Mouse)).